Here is a 178-residue protein sequence, read N- to C-terminus: SPbeta prophage-derived uncharacterized protein YonC (178 aa).

The sequence is that of SPbeta prophage-derived uncharacterized protein YonC (yonC) from Bacillus subtilis (strain 168).